A 315-amino-acid chain; its full sequence is Methionyl-tRNA formyltransferase (315 aa).

113 to 116 is a (6S)-5,6,7,8-tetrahydrofolate binding site; sequence SLLP.

The protein belongs to the Fmt family.

The enzyme catalyses L-methionyl-tRNA(fMet) + (6R)-10-formyltetrahydrofolate = N-formyl-L-methionyl-tRNA(fMet) + (6S)-5,6,7,8-tetrahydrofolate + H(+). Its function is as follows. Attaches a formyl group to the free amino group of methionyl-tRNA(fMet). The formyl group appears to play a dual role in the initiator identity of N-formylmethionyl-tRNA by promoting its recognition by IF2 and preventing the misappropriation of this tRNA by the elongation apparatus. In Yersinia pseudotuberculosis serotype O:1b (strain IP 31758), this protein is Methionyl-tRNA formyltransferase.